Reading from the N-terminus, the 121-residue chain is Fluoride-specific ion channel FluC 1 (121 aa).

4 helical membrane passes run 3 to 23 (YVYI…ISFL), 35 to 55 (VANL…IAFF), 64 to 84 (AITT…LELI), and 92 to 112 (FITL…LCYV). Residues G71 and T74 each contribute to the Na(+) site.

Belongs to the fluoride channel Fluc/FEX (TC 1.A.43) family.

The protein localises to the cell membrane. It carries out the reaction fluoride(in) = fluoride(out). Its activity is regulated as follows. Na(+) is not transported, but it plays an essential structural role and its presence is essential for fluoride channel function. Its function is as follows. Fluoride-specific ion channel. Important for reducing fluoride concentration in the cell, thus reducing its toxicity. The polypeptide is Fluoride-specific ion channel FluC 1 (Staphylococcus aureus (strain bovine RF122 / ET3-1)).